Reading from the N-terminus, the 683-residue chain is FAD-binding monooxygenase ausC (683 aa).

The N-linked (GlcNAc...) asparagine glycan is linked to N5. The helical transmembrane segment at I111 to G131 threads the bilayer. Residues T150–W153, D162–T163, and Y168 each bind FAD. Residue M160 to D162 coordinates NADP(+). N286 is a glycosylation site (N-linked (GlcNAc...) asparagine). NADP(+) contacts are provided by residues T310 to Q316 and R333 to T334. 2 N-linked (GlcNAc...) asparagine glycosylation sites follow: N525 and N572.

The protein belongs to the FAD-binding monooxygenase family. FAD serves as cofactor.

The protein localises to the membrane. The catalysed reaction is preaustinoid A + AH2 + O2 = preaustinoid A1 + A + H2O. Its pathway is secondary metabolite biosynthesis; terpenoid biosynthesis. Functionally, FAD-binding monooxygenase; part of the gene cluster A that mediates the biosynthesis of austinol and dehydroaustinol, two fungal meroterpenoids. The first step of the pathway is the synthesis of 3,5-dimethylorsellinic acid by the polyketide synthase ausA. 3,5-dimethylorsellinic acid is then prenylated by the polyprenyl transferase ausN. Further epoxidation by the FAD-dependent monooxygenase ausM and cyclization by the probable terpene cyclase ausL lead to the formation of protoaustinoid A. Protoaustinoid A is then oxidized to spiro-lactone preaustinoid A3 by the combined action of the FAD-binding monooxygenases ausB and ausC, and the dioxygenase ausE. Acid-catalyzed keto-rearrangement and ring contraction of the tetraketide portion of preaustinoid A3 by ausJ lead to the formation of preaustinoid A4. The aldo-keto reductase ausK, with the help of ausH, is involved in the next step by transforming preaustinoid A4 into isoaustinone which is in turn hydroxylated by the P450 monooxygenase ausI to form austinolide. Finally, the cytochrome P450 monooxygenase ausG modifies austinolide to austinol. Austinol can be further modified to dehydroaustinol which forms a diffusible complex with diorcinol that initiates conidiation. Due to genetic rearrangements of the clusters and the subsequent loss of some enzymes, the end products of the Emericella nidulans austinoid biosynthesis clusters are austinol and dehydroaustinol, even if additional enzymes, such as the O-acetyltransferase ausQ and the cytochrome P450 monooxygenase ausR are still functional. The chain is FAD-binding monooxygenase ausC from Emericella nidulans (strain FGSC A4 / ATCC 38163 / CBS 112.46 / NRRL 194 / M139) (Aspergillus nidulans).